A 231-amino-acid chain; its full sequence is NADH-ubiquinone oxidoreductase chain 4 (231 aa).

Transmembrane regions (helical) follow at residues 1-21 (PIAG…YGII), 34-54 (MFLP…LTCL), 63-85 (IAYS…TPWG), 89-111 (AMAL…NTTY), 128-148 (ILPM…ATPP), 169-189 (TIIL…HMFL), and 211-231 (LLMA…ELII).

It belongs to the complex I subunit 4 family.

The protein resides in the mitochondrion membrane. It carries out the reaction a ubiquinone + NADH + 5 H(+)(in) = a ubiquinol + NAD(+) + 4 H(+)(out). Functionally, core subunit of the mitochondrial membrane respiratory chain NADH dehydrogenase (Complex I) that is believed to belong to the minimal assembly required for catalysis. Complex I functions in the transfer of electrons from NADH to the respiratory chain. The immediate electron acceptor for the enzyme is believed to be ubiquinone. The sequence is that of NADH-ubiquinone oxidoreductase chain 4 (MT-ND4) from Cerrophidion godmani (Porthidium godmani).